The chain runs to 430 residues: MKKKPFYKVLYVQVIFAIIVGVILGHFYPSIATDMKPLGDGFIKLIKMVIGPIIFCTVVTGIAGMEDMKKVGRVGGKALLYFEIVSTFALLLGLAATHLLRPGVGFNIDPATLDGKAVASYAAKAHGQSTVDFLMHIIPNTMVDAFAQGEILQILLIALLFGSVLAHLGERGRVVTDFIDGLTRVLFGIVHIVTKLAPIGAFGAMAFTIGKYGVGSLVPLLKLIGTFYLTSVVFVLVVLGAIARFTGFSIIRFVSYIKEELLIVLGTSSSEAALPQLMEKLEKAGCSRSVVGLVVPTGYSFNLDGTNIYMTMAVLFIAQATNIELTWMQQLTLLAVAMLTSKGASGVTGAGFITLAATLAVVPTIPLSGMVLILGIDRFMSECRALTNIVGNGVATVVVSAWEKELDRNKLRQALKGGGEVAPTETTAGV.

8 helical membrane-spanning segments follow: residues 9 to 29 (VLYV…HFYP), 45 to 65 (LIKM…IAGM), 79 to 99 (LLYF…ATHL), 149 to 169 (GEIL…AHLG), 185 to 205 (VLFG…FGAM), 223 to 243 (LIGT…GAIA), 308 to 328 (IYMT…LTWM), and 356 to 376 (AATL…ILGI).

Belongs to the dicarboxylate/amino acid:cation symporter (DAACS) (TC 2.A.23) family.

The protein resides in the cell inner membrane. Responsible for the transport of dicarboxylates such as succinate, fumarate, and malate from the periplasm across the membrane. The sequence is that of C4-dicarboxylate transport protein from Burkholderia orbicola (strain MC0-3).